Consider the following 662-residue polypeptide: ATP-dependent zinc metalloprotease FtsH (662 aa).

Residues 1 to 15 (MSENPVKRPGKDGSR) are compositionally biased toward basic and acidic residues. The disordered stretch occupies residues 1–35 (MSENPVKRPGKDGSRNKFKPVQEEGGTPGWFRSKG). Residues 1 to 39 (MSENPVKRPGKDGSRNKFKPVQEEGGTPGWFRSKGESPQ) are Cytoplasmic-facing. Residues 40–60 (GKFPGFLLFLMAGLLMLFVFL) form a helical membrane-spanning segment. Residues 61 to 154 (RFFSGTDAPE…LKVEKGSSDL (94 aa)) are Periplasmic-facing. A helical membrane pass occupies residues 155-175 (NTFLALFAPWIIFAALYFFLF). The Cytoplasmic segment spans residues 176-662 (RRMSGQNGAQ…QGALPNPVTA (487 aa)). Position 250 to 257 (250 to 257 (GPPGTGKT)) interacts with ATP. Zn(2+) is bound at residue histidine 472. The active site involves glutamate 473. Histidine 476 and aspartate 548 together coordinate Zn(2+).

This sequence in the central section; belongs to the AAA ATPase family. The protein in the C-terminal section; belongs to the peptidase M41 family. In terms of assembly, homohexamer. Requires Zn(2+) as cofactor.

Its subcellular location is the cell inner membrane. Its function is as follows. Acts as a processive, ATP-dependent zinc metallopeptidase for both cytoplasmic and membrane proteins. Plays a role in the quality control of integral membrane proteins. The chain is ATP-dependent zinc metalloprotease FtsH from Pelodictyon phaeoclathratiforme (strain DSM 5477 / BU-1).